Reading from the N-terminus, the 288-residue chain is Ice-binding protein (288 aa).

An N-terminal signal peptide occupies residues 1–22 (MFSTTLINTFSLGLLAVVSVVA). 2 short sequence motifs (ice-binding site motif (T-A/G-X-T/N)) span residues 75-78 (TAGN) and 154-157 (TAFN). A glycan (N-linked (GlcNAc...) asparagine) is linked at Asn-194. Short sequence motifs (ice-binding site motif (T-A/G-X-T/N)) lie at residues 196–199 (TGVT) and 265–268 (TGAT).

It belongs to the ice-binding protein family.

It localises to the secreted. Functionally, binds ice crystals and most probably inhibits their growth in order to prevent cell damage from extracellular ice. The protein is Ice-binding protein of Lentinula edodes (Shiitake mushroom).